Here is a 230-residue protein sequence, read N- to C-terminus: Sugar fermentation stimulation protein homolog (230 aa).

The protein belongs to the SfsA family.

This Caldivirga maquilingensis (strain ATCC 700844 / DSM 13496 / JCM 10307 / IC-167) protein is Sugar fermentation stimulation protein homolog.